Reading from the N-terminus, the 347-residue chain is Probable inactive UDP-arabinopyranose mutase 2 (347 aa).

Residue R145 is glycosylated (N-linked (Glc...) arginine).

It belongs to the RGP family. As to quaternary structure, heteromers with UAM1 and UAM3. In terms of processing, is not reversibly glycosylated in vitro by UDP-glucose, UDP-xylose and UDP-galactose.

It is found in the golgi apparatus. Functionally, probable inactive UDP-L-arabinose mutase. Inactive in vitro, but associates with UAM1 and UAM3. The chain is Probable inactive UDP-arabinopyranose mutase 2 from Oryza sativa subsp. japonica (Rice).